The sequence spans 153 residues: NADPH-dependent 7-cyano-7-deazaguanine reductase (153 aa).

Residues 1–26 (MVKIHDGASQLGANVAAPRSPEEATL) are disordered. The Thioimide intermediate role is filled by C51. Catalysis depends on D58, which acts as the Proton donor. Substrate contacts are provided by residues 73–75 (VES) and 92–93 (HE).

Belongs to the GTP cyclohydrolase I family. QueF type 1 subfamily.

Its subcellular location is the cytoplasm. The enzyme catalyses 7-aminomethyl-7-carbaguanine + 2 NADP(+) = 7-cyano-7-deazaguanine + 2 NADPH + 3 H(+). It functions in the pathway tRNA modification; tRNA-queuosine biosynthesis. Its function is as follows. Catalyzes the NADPH-dependent reduction of 7-cyano-7-deazaguanine (preQ0) to 7-aminomethyl-7-deazaguanine (preQ1). The polypeptide is NADPH-dependent 7-cyano-7-deazaguanine reductase (Methylocella silvestris (strain DSM 15510 / CIP 108128 / LMG 27833 / NCIMB 13906 / BL2)).